A 72-amino-acid polypeptide reads, in one-letter code: NAD(P)H-quinone oxidoreductase subunit O (72 aa).

This sequence belongs to the complex I NdhO subunit family. In terms of assembly, NDH-1 can be composed of about 15 different subunits; different subcomplexes with different compositions have been identified which probably have different functions.

It localises to the cellular thylakoid membrane. The catalysed reaction is a plastoquinone + NADH + (n+1) H(+)(in) = a plastoquinol + NAD(+) + n H(+)(out). It catalyses the reaction a plastoquinone + NADPH + (n+1) H(+)(in) = a plastoquinol + NADP(+) + n H(+)(out). Its function is as follows. NDH-1 shuttles electrons from an unknown electron donor, via FMN and iron-sulfur (Fe-S) centers, to quinones in the respiratory and/or the photosynthetic chain. The immediate electron acceptor for the enzyme in this species is believed to be plastoquinone. Couples the redox reaction to proton translocation, and thus conserves the redox energy in a proton gradient. Cyanobacterial NDH-1 also plays a role in inorganic carbon-concentration. In Crocosphaera subtropica (strain ATCC 51142 / BH68) (Cyanothece sp. (strain ATCC 51142)), this protein is NAD(P)H-quinone oxidoreductase subunit O.